The primary structure comprises 332 residues: Phosphate acyltransferase (332 aa).

This sequence belongs to the PlsX family. As to quaternary structure, homodimer. Probably interacts with PlsY.

It is found in the cytoplasm. The catalysed reaction is a fatty acyl-[ACP] + phosphate = an acyl phosphate + holo-[ACP]. It functions in the pathway lipid metabolism; phospholipid metabolism. In terms of biological role, catalyzes the reversible formation of acyl-phosphate (acyl-PO(4)) from acyl-[acyl-carrier-protein] (acyl-ACP). This enzyme utilizes acyl-ACP as fatty acyl donor, but not acyl-CoA. This chain is Phosphate acyltransferase, found in Thermoanaerobacter pseudethanolicus (strain ATCC 33223 / 39E) (Clostridium thermohydrosulfuricum).